Here is a 209-residue protein sequence, read N- to C-terminus: Ribonuclease HII (209 aa).

In terms of domain architecture, RNase H type-2 spans 7–198 (GPVAGVDEAG…VAKAHQEWLH (192 aa)). A divalent metal cation contacts are provided by Asp13, Glu14, and Asp107.

It belongs to the RNase HII family. The cofactor is Mn(2+). It depends on Mg(2+) as a cofactor.

It is found in the cytoplasm. It carries out the reaction Endonucleolytic cleavage to 5'-phosphomonoester.. In terms of biological role, endonuclease that specifically degrades the RNA of RNA-DNA hybrids. This is Ribonuclease HII from Corynebacterium glutamicum (strain ATCC 13032 / DSM 20300 / JCM 1318 / BCRC 11384 / CCUG 27702 / LMG 3730 / NBRC 12168 / NCIMB 10025 / NRRL B-2784 / 534).